A 426-amino-acid polypeptide reads, in one-letter code: 3-phosphoshikimate 1-carboxyvinyltransferase (426 aa).

Residues lysine 22, serine 23, and arginine 27 each coordinate 3-phosphoshikimate. Lysine 22 is a phosphoenolpyruvate binding site. Positions 96 and 124 each coordinate phosphoenolpyruvate. Serine 170, serine 171, glutamine 172, serine 198, aspartate 314, asparagine 337, and lysine 341 together coordinate 3-phosphoshikimate. Glutamine 172 is a phosphoenolpyruvate binding site. The active-site Proton acceptor is aspartate 314. Phosphoenolpyruvate is bound by residues arginine 345, arginine 387, and lysine 412.

It belongs to the EPSP synthase family. In terms of assembly, monomer.

The protein resides in the cytoplasm. The enzyme catalyses 3-phosphoshikimate + phosphoenolpyruvate = 5-O-(1-carboxyvinyl)-3-phosphoshikimate + phosphate. It participates in metabolic intermediate biosynthesis; chorismate biosynthesis; chorismate from D-erythrose 4-phosphate and phosphoenolpyruvate: step 6/7. In terms of biological role, catalyzes the transfer of the enolpyruvyl moiety of phosphoenolpyruvate (PEP) to the 5-hydroxyl of shikimate-3-phosphate (S3P) to produce enolpyruvyl shikimate-3-phosphate and inorganic phosphate. This is 3-phosphoshikimate 1-carboxyvinyltransferase from Colwellia psychrerythraea (strain 34H / ATCC BAA-681) (Vibrio psychroerythus).